Reading from the N-terminus, the 95-residue chain is Co-chaperonin GroES (95 aa).

Belongs to the GroES chaperonin family. Heptamer of 7 subunits arranged in a ring. Interacts with the chaperonin GroEL.

The protein resides in the cytoplasm. Its function is as follows. Together with the chaperonin GroEL, plays an essential role in assisting protein folding. The GroEL-GroES system forms a nano-cage that allows encapsulation of the non-native substrate proteins and provides a physical environment optimized to promote and accelerate protein folding. GroES binds to the apical surface of the GroEL ring, thereby capping the opening of the GroEL channel. This is Co-chaperonin GroES from Streptococcus salivarius.